The chain runs to 156 residues: Movement protein P17 (156 aa).

The tract at residues 38–54 (AEDAEEEAIAAQEELEF) is homodimerization. 2 disordered regions span residues 55-80 (PEDEAQARHSCLQRTTSWATPKEVSP) and 106-156 (ASYF…IKRG). Positions 57–156 (DEAQARHSCL…RAAPKLIKRG (100 aa)) are RNA-binding. Phosphoserine is present on residues serine 71, serine 79, serine 137, and serine 140. Basic residues predominate over residues 144–156 (KLRRAAPKLIKRG).

Belongs to the polerovirus movement protein family. In terms of assembly, homodimer. Expressed as a nonphosphorylated 20kDa form and a phosphorylated 22kDa form. Phosphorylated by a host PKC-related kinase. Serine phosphorylation is required for plamodesma targeting.

The protein resides in the host cell junction. The protein localises to the host plasmodesma. It localises to the host chloroplast envelope. Its subcellular location is the host Golgi apparatus. It is found in the host mitochondrion outer membrane. Together with movement protein P3a, facilitates long-distance movement of virions in host. Transports viral genome to neighboring plant cells directly through plasmosdesmata, without any budding. The movement protein allows efficient cell to cell propagation, by bypassing the host cell wall barrier. Binds ssRNA. The polypeptide is Movement protein P17 (Potato leafroll virus (strain Potato/Canada/Rowhani/1979) (PLrV)).